A 281-amino-acid chain; its full sequence is Oxidase pynE (281 aa).

The protein belongs to the avfA family.

It participates in secondary metabolite biosynthesis. Functionally, oxidase; part of the gene cluster that mediates the biosynthesis of pyranonigrins, a family of antioxidative compounds. The first step of pyranonigrins biosynthesis is performed by the hybrid PKS-NRPS synthetase that condenses 6 malonyl-CoA units to an acetyl starter unit, to form a 1,3,5-trioxotetradecane-6,8-dienyl-ACP. The enoyl reductase (ER) domain of pynA is likely to be functional during the first two rounds of polyketide chain extension, to generate the saturated C-C bonds of the alkyl side chain. PynA subsequently forms the amide bond between the acyl chain and L-serine. Although pynA has a terminal reductase domain, it appears to require the thioesterase pynI for the release of the straight-chain intermediate from pynA via the formation of a tetramic acid pyranonigrin J. The methyltransferase pynC then coverts pyranonigrin J to pyranonigrin I via N-methylation. The FAD-dependent monooxygenase pynG catalyzes an epoxidation-mediated cyclization to form the dihydro-gamma-pyrone moiety, followed by pynD-catalyzed oxidation of the alcohol to the ketone and enolization to yield the characteristic tetramic acid-fused gamma-pyrone core of pyranonigrin H. Pyranonigrin H is substrate of pynH for dehydration-mediated exo-methylene formation from the serine side chain to produce pyranonigrin E, before the oxidase pynE reduces the exo-methylene of pyranonigrin E into a pendant methyl to form pyranonigrin G. The FAD-linked oxidoreductase pynB performs the reverse reaction and converts pyranonigrin G back to pyranonigrin E. The protein is Oxidase pynE of Aspergillus niger (strain ATCC MYA-4892 / CBS 513.88 / FGSC A1513).